Consider the following 303-residue polypeptide: Hemolysin C (303 aa).

2 consecutive CBS domains span residues 81–143 (MVPR…NSPL) and 146–203 (LIRK…IDDE).

It belongs to the UPF0053 family. Hemolysin C subfamily.

The sequence is that of Hemolysin C (tlyC) from Rickettsia prowazekii (strain Madrid E).